The chain runs to 341 residues: Glycerol-3-phosphate dehydrogenase [NAD(P)+] (341 aa).

Residues Ser-13, Trp-14, and Lys-108 each contribute to the NADPH site. Sn-glycerol 3-phosphate-binding residues include Lys-108, Gly-139, and Ser-141. An NADPH-binding site is contributed by Ala-143. Sn-glycerol 3-phosphate contacts are provided by Lys-194, Asp-247, Ser-257, Arg-258, and Asn-259. The active-site Proton acceptor is Lys-194. Arg-258 provides a ligand contact to NADPH. NADPH-binding residues include Val-282 and Glu-284.

Belongs to the NAD-dependent glycerol-3-phosphate dehydrogenase family.

It localises to the cytoplasm. The enzyme catalyses sn-glycerol 3-phosphate + NAD(+) = dihydroxyacetone phosphate + NADH + H(+). It catalyses the reaction sn-glycerol 3-phosphate + NADP(+) = dihydroxyacetone phosphate + NADPH + H(+). Its pathway is membrane lipid metabolism; glycerophospholipid metabolism. Its function is as follows. Catalyzes the reduction of the glycolytic intermediate dihydroxyacetone phosphate (DHAP) to sn-glycerol 3-phosphate (G3P), the key precursor for phospholipid synthesis. This Lactococcus lactis subsp. lactis (strain IL1403) (Streptococcus lactis) protein is Glycerol-3-phosphate dehydrogenase [NAD(P)+].